A 398-amino-acid chain; its full sequence is Na(+)/H(+) antiporter NhaA (398 aa).

11 helical membrane passes run 21–41 (LGGY…NSPL), 66–86 (VLHW…GLEI), 101–121 (IVLP…VYLL), 132–152 (GWAI…ALLG), 161–181 (IFLT…IAVF), 184–204 (AELN…LCVL), 216–236 (LLVG…ATLA), 274–294 (LLIV…GMGI), 305–325 (IALG…WLAI), 343–363 (GVAL…ALAF), and 374–394 (IGVL…LRVL).

Belongs to the NhaA Na(+)/H(+) (TC 2.A.33) antiporter family.

It localises to the cell inner membrane. It carries out the reaction Na(+)(in) + 2 H(+)(out) = Na(+)(out) + 2 H(+)(in). Its function is as follows. Na(+)/H(+) antiporter that extrudes sodium in exchange for external protons. The polypeptide is Na(+)/H(+) antiporter NhaA (Bordetella bronchiseptica (strain ATCC BAA-588 / NCTC 13252 / RB50) (Alcaligenes bronchisepticus)).